Consider the following 206-residue polypeptide: Hypoxanthine-guanine phosphoribosyltransferase (206 aa).

GMP is bound by residues 110–118 (DEVDDTRTT), lysine 154, and 181–187 (WIMYPWE). Aspartate 114 acts as the Proton acceptor in catalysis.

Belongs to the purine/pyrimidine phosphoribosyltransferase family. Dimer. Mg(2+) serves as cofactor.

Its subcellular location is the endoplasmic reticulum. The catalysed reaction is IMP + diphosphate = hypoxanthine + 5-phospho-alpha-D-ribose 1-diphosphate. It carries out the reaction GMP + diphosphate = guanine + 5-phospho-alpha-D-ribose 1-diphosphate. Converts guanine to guanosine monophosphate, and hypoxanthine to inosine monophosphate. Transfers the 5-phosphoribosyl group from 5-phosphoribosylpyrophosphate onto the purine. Plays a central role in the generation of purine nucleotides through the purine salvage pathway. The sequence is that of Hypoxanthine-guanine phosphoribosyltransferase (hpt1) from Schizosaccharomyces pombe (strain 972 / ATCC 24843) (Fission yeast).